A 308-amino-acid chain; its full sequence is Elongation factor Ts (308 aa).

Residues 80 to 83 are involved in Mg(2+) ion dislocation from EF-Tu; it reads TDFV.

This sequence belongs to the EF-Ts family.

It is found in the cytoplasm. In terms of biological role, associates with the EF-Tu.GDP complex and induces the exchange of GDP to GTP. It remains bound to the aminoacyl-tRNA.EF-Tu.GTP complex up to the GTP hydrolysis stage on the ribosome. This chain is Elongation factor Ts, found in Rhizobium etli (strain ATCC 51251 / DSM 11541 / JCM 21823 / NBRC 15573 / CFN 42).